We begin with the raw amino-acid sequence, 287 residues long: 4-diphosphocytidyl-2-C-methyl-D-erythritol kinase (287 aa).

Residue Lys12 is part of the active site. ATP is bound at residue 95–105 (PAQAGMGGGSS). The active site involves Asp137.

This sequence belongs to the GHMP kinase family. IspE subfamily.

The enzyme catalyses 4-CDP-2-C-methyl-D-erythritol + ATP = 4-CDP-2-C-methyl-D-erythritol 2-phosphate + ADP + H(+). It participates in isoprenoid biosynthesis; isopentenyl diphosphate biosynthesis via DXP pathway; isopentenyl diphosphate from 1-deoxy-D-xylulose 5-phosphate: step 3/6. In terms of biological role, catalyzes the phosphorylation of the position 2 hydroxy group of 4-diphosphocytidyl-2C-methyl-D-erythritol. The protein is 4-diphosphocytidyl-2-C-methyl-D-erythritol kinase of Delftia acidovorans (strain DSM 14801 / SPH-1).